A 389-amino-acid chain; its full sequence is MKVVSLFSGIGGIELGLHQSGHTTEIFCEVDPLAKAVLSKNFPGVKIEDDINEIRELPSCDLVAAGFPCQDLSQAGGKEGIDGSRSGLVKKLFELIEKKEHANRPPWILIENVPYMLRLNRGKAMSYLTSVLSELGYTWAYRTVDARCFGLPQRRHRVILLASLFEDPKDVIFSQDHSEPDLDGKPSVVDHSNYYGFYWTEGLRGVGWAREAVPPIKCGSSVGIASPPAVWSPYEDIVGTINIRDAERLQGFPEDWTNITTETGKDIKEGARWRLVGNAVSVRVSKWIGENLSQPKGSISDFEGELVTKTWPSAAWGYGDKKYKVPVSKWVANTEQIAISEFLNHPLKPLSARALNGFLGRAARCTNVNYSDEFINSLERCKDRQLQKV.

The SAM-dependent MTase C5-type domain maps to Met1–Ile299. Residue Cys69 is part of the active site.

It belongs to the class I-like SAM-binding methyltransferase superfamily. C5-methyltransferase family. Monomer. May form a complex with YdiP, also seems to be active alone.

It catalyses the reaction a 2'-deoxycytidine in DNA + S-adenosyl-L-methionine = a 5-methyl-2'-deoxycytidine in DNA + S-adenosyl-L-homocysteine + H(+). With respect to regulation, somewhat inhibited by MgCl(2) and spermidine, strongly inhibited by MnCl(2). Functionally, a methylase, recognizes the double-stranded sequence 5'-YTCGAR-3', methylates C-3 on both strands, and protects the DNA from cleavage by the BsuMI endonuclease. This chain is Type II methyltransferase M2.BsuMI (ydiP), found in Bacillus subtilis (strain 168).